The following is a 267-amino-acid chain: GTP cyclohydrolase FolE2 (267 aa).

This sequence belongs to the GTP cyclohydrolase IV family.

It catalyses the reaction GTP + H2O = 7,8-dihydroneopterin 3'-triphosphate + formate + H(+). It participates in cofactor biosynthesis; 7,8-dihydroneopterin triphosphate biosynthesis; 7,8-dihydroneopterin triphosphate from GTP: step 1/1. Functionally, converts GTP to 7,8-dihydroneopterin triphosphate. The polypeptide is GTP cyclohydrolase FolE2 (Nitrosomonas eutropha (strain DSM 101675 / C91 / Nm57)).